Consider the following 686-residue polypeptide: L-type lectin-domain containing receptor kinase VII.1 (686 aa).

A signal peptide spans 1 to 20 (MKALLFLLTLFLILPNPISA). The tract at residues 21 to 256 (IDFIFNGFND…SHKILAWSFS (236 aa)) is legume-lectin like. The Extracellular portion of the chain corresponds to 21-286 (IDFIFNGFND…PKDSIVKAKW (266 aa)). N-linked (GlcNAc...) asparagine glycans are attached at residues asparagine 29, asparagine 34, asparagine 52, asparagine 64, asparagine 111, asparagine 123, asparagine 168, asparagine 203, asparagine 224, and asparagine 259. A helical transmembrane segment spans residues 287-307 (FVFVLVLICFLVVALVGLVLF). Over 308 to 686 (AVVRKRLERA…SWNSSILEGR (379 aa)) the chain is Cytoplasmic. The 282-residue stretch at 347-628 (FDEKNVIGIG…VFEGDKAEIF (282 aa)) folds into the Protein kinase domain. ATP is bound by residues 353–361 (IGIGGNGKV) and lysine 376. Aspartate 475 (proton acceptor) is an active-site residue.

It in the C-terminal section; belongs to the protein kinase superfamily. Ser/Thr protein kinase family. In the N-terminal section; belongs to the leguminous lectin family.

Its subcellular location is the cell membrane. It catalyses the reaction L-seryl-[protein] + ATP = O-phospho-L-seryl-[protein] + ADP + H(+). The enzyme catalyses L-threonyl-[protein] + ATP = O-phospho-L-threonyl-[protein] + ADP + H(+). This chain is L-type lectin-domain containing receptor kinase VII.1 (LECRK71), found in Arabidopsis thaliana (Mouse-ear cress).